Reading from the N-terminus, the 546-residue chain is MASVNSRSGFCNSNSTFYSKRTPIPLPPNPSLDVTTFISSQAHRGRIAFIDASTGQNLTFTELWRAVESVADCLSEIGIRKGHVVLLLSPNSILFPVVCLSVMSLGAIITTTNPLNTSNEIAKQIKDSNPVLAFTTSQLLPKISAAAKKLPIVLMDEERVDSVGDVRRLVEMMKKEPSGNRVKERVDQDDTATLLYSSGTTGMSKGVISSHRNLIAMVQTIVNRFGSDDGEQRFICTVPMFHIYGLAAFATGLLAYGSTIIVLSKFEMHEMMSAIGKYQATSLPLVPPILVAMVNGADQIKAKYDLSSMHTVLCGGAPLSKEVTEGFAEKYPTVKILQGYGLTESTGIGASTDTVEESRRYGTAGKLSASMEGRIVDPVTGQILGPKQTGELWLKGPSIMKGYFSNEEATSSTLDSEGWLRTGDLCYIDEDGFIFVVDRLKELIKYKGYQVAPAELEALLLTHPEITDAAVIPFPDKEVGQFPMAYVVRKTGSSLSEKTIMEFVAKQVAPYKRIRKVAFVSSIPKNPSGKILRKDLIKIATSNSKL.

ATP is bound by residues S197, S198, G199, T200, T201, and K205. Residue K265 coordinates CoA. An SBD1 region spans residues 267–338 (EMHEMMSAIG…EKYPTVKILQ (72 aa)). Q338, G339, T343, D424, and R439 together coordinate ATP. Residues 339–403 (GYGLTESTGI…LKGPSIMKGY (65 aa)) form an SBD2 region. CoA contacts are provided by K447 and G448. Position 530 (K530) interacts with ATP. The short motif at 544 to 546 (SKL) is the Microbody targeting signal element.

It belongs to the ATP-dependent AMP-binding enzyme family. It depends on Mg(2+) as a cofactor. As to expression, expressed at low levels in seedlings, cotyledons, leaves, hypocotyls and roots.

The protein resides in the peroxisome. It carries out the reaction (9S,13S,15Z)-12-oxophyto-10,15-dienoate + ATP + CoA = (10Z,15Z)-12-oxophytodienoyl-CoA + AMP + diphosphate. The catalysed reaction is (1S,2S)-OPC-8 + ATP + CoA = OPC8-CoA + AMP + diphosphate. It catalyses the reaction hexadecanoate + ATP + CoA = hexadecanoyl-CoA + AMP + diphosphate. The enzyme catalyses (9Z)-octadecenoate + ATP + CoA = (9Z)-octadecenoyl-CoA + AMP + diphosphate. It carries out the reaction tetradecanoate + ATP + CoA = tetradecanoyl-CoA + AMP + diphosphate. The catalysed reaction is decanoate + ATP + CoA = decanoyl-CoA + AMP + diphosphate. It catalyses the reaction dodecanoate + ATP + CoA = dodecanoyl-CoA + AMP + diphosphate. The enzyme catalyses octadecanoate + ATP + CoA = octadecanoyl-CoA + AMP + diphosphate. It carries out the reaction OPC-6 + ATP + CoA = OPC-6-CoA + AMP + diphosphate. The catalysed reaction is dinor-OPDA + ATP + CoA = dinor-OPDA-CoA + AMP + diphosphate. Its function is as follows. Contributes to jasmonic acid biosynthesis by initiating the beta-oxidative chain shortening of its precursors. Converts 12-oxo-phytodienoic acid (OPDA) and 3-oxo-2-(2'-pentenyl)-cyclopentane-1-octanoic acid (OPC-8:0) into OPDA-CoA and OPC-8:0-CoA, respectively. Follows a two-step reaction mechanism, wherein the carboxylate substrate first undergoes adenylation by ATP, followed by a thioesterification in the presence of CoA to yield the final CoA thioester. This is Peroxisomal OPC-8:0-CoA ligase 1 from Arabidopsis thaliana (Mouse-ear cress).